The following is a 305-amino-acid chain: Syntaxin-123 (305 aa).

M1 carries the post-translational modification N-acetylmethionine. Topologically, residues 1-278 (MNDLISSSFK…KVLQRNNRKW (278 aa)) are cytoplasmic. Residues 46-66 (VKEDMKAVDEIHKRLQDANEE) adopt a coiled-coil conformation. The t-SNARE coiled-coil homology domain maps to 206–268 (LSEIQERHDT…MRGTDQLHGA (63 aa)). The chain crosses the membrane as a helical; Anchor for type IV membrane protein span at residues 279–299 (ACIATILAIVVVIVILFPILF). The Vesicular portion of the chain corresponds to 300 to 305 (NTLLRP).

The protein belongs to the syntaxin family. In terms of assembly, part of the t-SNARE complex. Expressed in tips of root hairs.

The protein resides in the membrane. Functionally, vesicle trafficking protein that functions in the secretory pathway. Acts in coordination with SYP132 to mediate tip-focused membrane trafficking for root hair tip growth. Functions in root hair elongation by forming SNARE complexes with VAMP721,VAMP722 or VAMP724. The protein is Syntaxin-123 of Arabidopsis thaliana (Mouse-ear cress).